The sequence spans 136 residues: MLATRNRLRTSTDFSTTVRSGVRNGRRNVVLYTVAIAADEPSRIGFIVSKSVGNAVVRNLVKRRLREAGALSLQQYGTGFAIVVRALPAAAAASWDQLLADYNAALETTMKRLGGRLPRAASVVSRETRQEGTPRA.

It belongs to the RnpA family. As to quaternary structure, consists of a catalytic RNA component (M1 or rnpB) and a protein subunit.

The catalysed reaction is Endonucleolytic cleavage of RNA, removing 5'-extranucleotides from tRNA precursor.. RNaseP catalyzes the removal of the 5'-leader sequence from pre-tRNA to produce the mature 5'-terminus. It can also cleave other RNA substrates such as 4.5S RNA. The protein component plays an auxiliary but essential role in vivo by binding to the 5'-leader sequence and broadening the substrate specificity of the ribozyme. The protein is Ribonuclease P protein component of Arthrobacter sp. (strain FB24).